Reading from the N-terminus, the 78-residue chain is Translational regulator CsrA (78 aa).

This sequence belongs to the CsrA/RsmA family. Homodimer; the beta-strands of each monomer intercalate to form a hydrophobic core, while the alpha-helices form wings that extend away from the core.

Its subcellular location is the cytoplasm. A translational regulator that binds mRNA to regulate translation initiation and/or mRNA stability. Usually binds in the 5'-UTR at or near the Shine-Dalgarno sequence preventing ribosome-binding, thus repressing translation. Its main target seems to be the major flagellin gene, while its function is anatagonized by FliW. The protein is Translational regulator CsrA of Desulfotalea psychrophila (strain LSv54 / DSM 12343).